The following is a 1481-amino-acid chain: Cystic fibrosis transmembrane conductance regulator (1481 aa).

At 1–77 (MQRSPLEKAS…KLINALRRCF (77 aa)) the chain is on the cytoplasmic side. The chain crosses the membrane as a helical span at residues 78 to 98 (FWRFMFYGIILYLGEVTKAVQ). One can recognise an ABC transmembrane type-1 1 domain in the interval 81-365 (FMFYGIILYL…WAVQTWYDSL (285 aa)). The Extracellular segment spans residues 99 to 122 (PLLLGRIIASYDPDNEAERSIAIY). Residues 123 to 146 (LGIGLCLLFIVRTLLLHPAIFGLH) traverse the membrane as a helical segment. Topologically, residues 147–195 (HIGMQMRIAMFSLIYKKTLKLSSRVLDKISIGQLVSLLSNNLNKFDEGL) are cytoplasmic. Residues 196-216 (ALAHFVWIAPLQVTLLMGLLW) form a helical membrane-spanning segment. Residues 217–222 (DLLQAS) lie on the Extracellular side of the membrane. A helical membrane pass occupies residues 223–243 (AFCGLAFLIVLALFQAGLGRM). The Cytoplasmic segment spans residues 244 to 298 (MMKYRDQRAGKINERLVITSEMIENIQSVKAYCWEEAMEKMIENLRQTELKLTRK). The chain crosses the membrane as a helical span at residues 299-319 (AAYVRYFNSSAFFFSGFFVVF). The Extracellular segment spans residues 320–339 (LSVLPYALIKGIVLRRIFTT). The chain crosses the membrane as a helical span at residues 340–358 (ISFCIVLRMAVTRQFPWAV). The Cytoplasmic segment spans residues 359–858 (QTWYDSLGAI…YLRYITIHKS (500 aa)). Residues tryptophan 401, serine 433, 457 to 464 (GSTGAGKT), and glutamine 492 contribute to the ATP site. In terms of domain architecture, ABC transporter 1 spans 422 to 645 (NGDNSLFFSN…RPDFSSKLMG (224 aa)). Cysteine 523 is lipidated: S-palmitoyl cysteine. 2 positions are modified to phosphoserine: serine 548 and serine 659. The interval 653–831 (SAERRNSILT…EEINEDDLKE (179 aa)) is disordered R region. At serine 669 the chain carries Phosphoserine; by PKA. Position 685 is a phosphoserine (serine 685). Lysine 687 participates in a covalent cross-link: Glycyl lysine isopeptide (Lys-Gly) (interchain with G-Cter in ubiquitin). Serine 699 and serine 711 each carry phosphoserine. Threonine 716 is subject to Phosphothreonine. 5 positions are modified to phosphoserine: serine 736, serine 767, serine 790, serine 795, and serine 813. A helical membrane pass occupies residues 859-879 (LIFVLIWCLVIFLAEVAASLV). The 297-residue stretch at 859 to 1155 (LIFVLIWCLV…AVNSSIDVDS (297 aa)) folds into the ABC transmembrane type-1 2 domain. Residues 880–918 (VLWLLKETPPQDSGNSTKGANNSYAVIITSTSSYYVFYI) lie on the Extracellular side of the membrane. N-linked (GlcNAc...) asparagine glycans are attached at residues asparagine 894 and asparagine 900. A discontinuously helical transmembrane segment spans residues 919 to 939 (YVGVADTLLALGLFRGLPLVH). At 940-990 (TLITVSKILHHKMLHSVLQAPMSTLNTLKAGGILNRFSKDMAILDDLLPLT) the chain is on the cytoplasmic side. Residues 991-1011 (IFDFIQLLLIVIGAVAVVSVL) traverse the membrane as a helical segment. Topologically, residues 1012–1013 (QP) are extracellular. Residues 1014-1034 (YIFLATVPVIAAFIILRAYFL) traverse the membrane as a helical segment. Over 1035-1095 (HTSQQLKQLE…TANWFLYLST (61 aa)) the chain is Cytoplasmic. A helical membrane pass occupies residues 1096–1116 (LRWFQMRIEMIFVIFFIAVTF). Residues 1117–1130 (ISILTTGEGEGTVG) are Extracellular-facing. Residues 1131–1151 (IILTLAMNIMSTLQWAVNSSI) form a helical membrane-spanning segment. Residues 1152 to 1481 (DVDSLMRSVS…TEEEVQETRL (330 aa)) lie on the Cytoplasmic side of the membrane. One can recognise an ABC transporter 2 domain in the interval 1211 to 1444 (MTVKDLTAKY…KSLFQQAISS (234 aa)). ATP is bound by residues tyrosine 1220 and 1245–1252 (GRTGSGKS). Positions 1387 to 1481 (RTLKQAFADC…TEEEVQETRL (95 aa)) are interaction with GORASP2. A lipid anchor (S-palmitoyl cysteine) is attached at cysteine 1396. Phosphoserine occurs at positions 1445 and 1457. The disordered stretch occupies residues 1449-1481 (KLFPHRNSSKHKSRSKIAALQEETEEEVQETRL). The segment covering 1451–1463 (FPHRNSSKHKSRS) has biased composition (basic residues). The span at 1470–1481 (EETEEEVQETRL) shows a compositional bias: acidic residues. The PDZ-binding motif lies at 1479 to 1481 (TRL).

The protein belongs to the ABC transporter superfamily. ABCC family. CFTR transporter (TC 3.A.1.202) subfamily. In terms of assembly, monomer; does not require oligomerization for channel activity. May form oligomers in the membrane. Interacts with SLC26A3, SLC26A6 and NHERF1. Interacts with SHANK2. Interacts with MYO6. Interacts (via C-terminus) with GOPC (via PDZ domain); this promotes CFTR internalization and thereby decreases channel activity. Interacts with SLC4A7 through NHERF1. Found in a complex with MYO5B and RAB11A. Interacts with ANO1. Interacts with SLC26A8. Interacts with AHCYL1; the interaction increases CFTR activity. Interacts with CSE1L. The core-glycosylated form interacts with GORASP2 (via PDZ GRASP-type 1 domain) in respone to ER stress. Interacts with MARCHF2; the interaction leads to CFTR ubiqtuitination and degradation. Interacts with ADGRG2. N-glycosylated. Post-translationally, phosphorylated; cAMP treatment promotes phosphorylation and activates the channel. Dephosphorylation decreases the ATPase activity (in vitro). Phosphorylation at PKA sites activates the channel. Phosphorylation at PKC sites enhances the response to phosphorylation by PKA. Phosphorylated by AMPK; this inhibits channel activity. In terms of processing, ubiquitinated, leading to its degradation in the lysosome. Deubiquitination by USP10 in early endosomes enhances its endocytic recycling to the cell membrane. Ubiquitinated by RNF185 during ER stress. Ubiquitinated by MARCHF2.

It localises to the apical cell membrane. It is found in the early endosome membrane. Its subcellular location is the cell membrane. The protein localises to the recycling endosome membrane. The protein resides in the endoplasmic reticulum membrane. It localises to the nucleus. The catalysed reaction is ATP + H2O + closed Cl(-) channel = ADP + phosphate + open Cl(-) channel.. It catalyses the reaction chloride(in) = chloride(out). The enzyme catalyses hydrogencarbonate(in) = hydrogencarbonate(out). It carries out the reaction ATP + H2O = ADP + phosphate + H(+). Functionally, epithelial ion channel that plays an important role in the regulation of epithelial ion and water transport and fluid homeostasis. Mediates the transport of chloride ions across the cell membrane. Possesses an intrinsic ATPase activity and utilizes ATP to gate its channel; the passive flow of anions through the channel is gated by cycles of ATP binding and hydrolysis by the ATP-binding domains. The ion channel is also permeable to HCO(3)(-); selectivity depends on the extracellular chloride concentration. Exerts its function also by modulating the activity of other ion channels and transporters. Contributes to the regulation of the pH and the ion content of the epithelial fluid layer. Modulates the activity of the epithelial sodium channel (ENaC) complex, in part by regulating the cell surface expression of the ENaC complex. May regulate bicarbonate secretion and salvage in epithelial cells by regulating the transporter SLC4A7. Can inhibit the chloride channel activity of ANO1. Plays a role in the chloride and bicarbonate homeostasis during sperm epididymal maturation and capacitation. This Equus caballus (Horse) protein is Cystic fibrosis transmembrane conductance regulator.